The primary structure comprises 64 residues: Large ribosomal subunit protein uL29 (64 aa).

Belongs to the universal ribosomal protein uL29 family.

This Coprothermobacter proteolyticus (strain ATCC 35245 / DSM 5265 / OCM 4 / BT) protein is Large ribosomal subunit protein uL29.